A 286-amino-acid polypeptide reads, in one-letter code: Centromere protein P (286 aa).

Residues 1-73 (MDSETRELRA…RSEHSFLSKL (73 aa)) are a coiled coil. The residue at position 38 (serine 38) is a Phosphoserine.

This sequence belongs to the CENP-P/CTF19 family. As to quaternary structure, component of the CENPA-CAD complex, composed of CENPI, CENPK, CENPL, CENPO, CENPP, CENPQ, CENPR and CENPS. The CENPA-CAD complex interacts with the CENPA-NAC complex, at least composed of CENPA, CENPC, CENPH, CENPM, CENPN, CENPT and CENPU.

It is found in the nucleus. It localises to the chromosome. Its subcellular location is the centromere. Functionally, component of the CENPA-CAD (nucleosome distal) complex, a complex recruited to centromeres which is involved in assembly of kinetochore proteins, mitotic progression and chromosome segregation. May be involved in incorporation of newly synthesized CENPA into centromeres via its interaction with the CENPA-NAC complex. In Mus musculus (Mouse), this protein is Centromere protein P (Cenpp).